Here is a 270-residue protein sequence, read N- to C-terminus: 3-phenylpropionate-dihydrodiol/cinnamic acid-dihydrodiol dehydrogenase (270 aa).

Residue 10-34 (FITGGGSGLGLALVERFIEEGAQVA) coordinates NAD(+). S143 is a substrate binding site. The Proton acceptor role is filled by Y156.

It belongs to the short-chain dehydrogenases/reductases (SDR) family.

It catalyses the reaction 3-(cis-5,6-dihydroxycyclohexa-1,3-dien-1-yl)propanoate + NAD(+) = 3-(2,3-dihydroxyphenyl)propanoate + NADH + H(+). The catalysed reaction is (2E)-3-(cis-5,6-dihydroxycyclohexa-1,3-dien-1-yl)prop-2-enoate + NAD(+) = (2E)-3-(2,3-dihydroxyphenyl)prop-2-enoate + NADH + H(+). Its pathway is aromatic compound metabolism; 3-phenylpropanoate degradation. Its function is as follows. Converts 3-phenylpropionate-dihydrodiol (PP-dihydrodiol) and cinnamic acid-dihydrodiol (CI-dihydrodiol) into 3-(2,3-dihydroxylphenyl)propanoic acid (DHPP) and 2,3-dihydroxicinnamic acid (DHCI), respectively. In Escherichia coli O157:H7, this protein is 3-phenylpropionate-dihydrodiol/cinnamic acid-dihydrodiol dehydrogenase.